Consider the following 476-residue polypeptide: UPF0481 protein At3g47200 (476 aa).

Residues 1 to 24 form a disordered region; that stretch reads MADKTDIISSSSDKASPPPPSAFR. A run of 2 helical transmembrane segments spans residues 133-153 and 439-459; these read LMFMMVLDGCFILMVFLIMSG and AVLFVILLTMLQSTVAILSYL.

Belongs to the UPF0481 family.

Its subcellular location is the membrane. The chain is UPF0481 protein At3g47200 from Arabidopsis thaliana (Mouse-ear cress).